Reading from the N-terminus, the 188-residue chain is MEDERSFSDICGGRLALQRRYYSPSCREFCLSCPRLSLRSLTAVTCTVWLAAYGLFTLCENSMILSAAIFITLLGLLGYLHFVKIDQETLLIIDSLGIQMTSSYASGKESTTFIEMGKVKDIVINEAIYMQKVIYYLCILLKDPVEPHGISQVVPVFQSAKPRLDCLIEVYRSCQEILAHQKATSTSP.

Belongs to the PIGH family. In terms of assembly, component of the glycosylphosphatidylinositol-N-acetylglucosaminyltransferase (GPI-GnT) complex composed at least by PIGA, PIGC, PIGH, PIGP, PIGQ, PIGY and DPM2. Interacts with PIGQ.

The protein localises to the cytoplasm. The protein operates within glycolipid biosynthesis; glycosylphosphatidylinositol-anchor biosynthesis. Part of the glycosylphosphatidylinositol-N-acetylglucosaminyltransferase (GPI-GnT) complex that catalyzes the transfer of N-acetylglucosamine from UDP-N-acetylglucosamine to phosphatidylinositol and participates in the first step of GPI biosynthesis. The sequence is that of Phosphatidylinositol N-acetylglucosaminyltransferase subunit H from Homo sapiens (Human).